Consider the following 786-residue polypeptide: Protein SEY1 (786 aa).

Residues 1-684 are Cytoplasmic-facing; that stretch reads MSDLKEAIQL…KRSIVNTTER (684 aa). Positions 35-262 constitute a GB1/RHD3-type G domain; sequence GVKYHVISVF…QDASFFKDEY (228 aa). A GTP-binding site is contributed by 45–52; it reads GSQSSGKS. The stretch at 355 to 375 forms a coiled coil; sequence KKVYEERRDDLIKQLNTIIDE. Residues 685 to 705 form a helical membrane-spanning segment; sequence IPLYMYALVVALGWGRIITIL. The Lumenal segment spans residues 706–708; that stretch reads RNP. A helical membrane pass occupies residues 709–729; the sequence is ATIILSIIVLAGAYFVHKLNL. Residues 730 to 786 lie on the Cytoplasmic side of the membrane; that stretch reads WGPLLQFANQATGQATAVLKQTVRSLVVDEEPKRKILVEPHESEGVDKEPSKNDQHL. Positions 765–786 are disordered; that stretch reads ILVEPHESEGVDKEPSKNDQHL.

This sequence belongs to the TRAFAC class dynamin-like GTPase superfamily. GB1/RHD3 GTPase family. RHD3 subfamily.

It localises to the endoplasmic reticulum membrane. Cooperates with the reticulon proteins and tubule-shaping DP1 family proteins to generate and maintain the structure of the tubular endoplasmic reticulum network. Has GTPase activity, which is required for its function in ER organization. The chain is Protein SEY1 from Kluyveromyces lactis (strain ATCC 8585 / CBS 2359 / DSM 70799 / NBRC 1267 / NRRL Y-1140 / WM37) (Yeast).